The sequence spans 690 residues: Serotransferrin-1 (690 aa).

An N-terminal signal peptide occupies residues 1-18 (MKLLLLSALLGCLATAYA). 2 consecutive Transferrin-like domains span residues 25–329 (VKWC…SLKK) and 340–669 (IKWC…SLRK). A disulfide bond links C28 and C50. The Fe(3+) site is built by D74 and Y104. 3 cysteine pairs are disulfide-bonded: C127/C207, C172/C186, and C235/C249. Residues T129, S134, G136, and W137 each contribute to the hydrogencarbonate site. A glycan (N-linked (GlcNAc...) asparagine) is linked at N169. Y201 serves as a coordination point for Fe(3+). H257 provides a ligand contact to Fe(3+). Disulfide bonds link C343/C379 and C353/C370. Fe(3+) is bound by residues D394 and Y428. 7 disulfide bridges follow: C404/C681, C419/C642, C451/C529, C475/C670, C485/C499, C496/C512, and C569/C583. Positions 453, 457, 459, and 460 each coordinate hydrogencarbonate. Residue Y523 coordinates Fe(3+). Residue H591 participates in Fe(3+) binding.

The protein belongs to the transferrin family. Monomer. In terms of tissue distribution, abundant in liver and serum with smaller amounts found in the stomach and kidney.

It is found in the secreted. Its function is as follows. Transferrins are iron binding transport proteins which can bind two Fe(3+) ions in association with the binding of an anion, usually bicarbonate. It is responsible for the transport of iron from sites of absorption and heme degradation to those of storage and utilization. Serum transferrin may also have a further role in stimulating cell proliferation. This chain is Serotransferrin-1 (tf1), found in Salmo salar (Atlantic salmon).